A 362-amino-acid polypeptide reads, in one-letter code: Chorismate synthase (362 aa).

Positions 48 and 54 each coordinate NADP(+). FMN contacts are provided by residues 131-133 (RSS), 243-244 (NA), Gly-287, 302-306 (KPTSS), and Arg-328.

The protein belongs to the chorismate synthase family. Homotetramer. The cofactor is FMNH2.

The enzyme catalyses 5-O-(1-carboxyvinyl)-3-phosphoshikimate = chorismate + phosphate. It functions in the pathway metabolic intermediate biosynthesis; chorismate biosynthesis; chorismate from D-erythrose 4-phosphate and phosphoenolpyruvate: step 7/7. Catalyzes the anti-1,4-elimination of the C-3 phosphate and the C-6 proR hydrogen from 5-enolpyruvylshikimate-3-phosphate (EPSP) to yield chorismate, which is the branch point compound that serves as the starting substrate for the three terminal pathways of aromatic amino acid biosynthesis. This reaction introduces a second double bond into the aromatic ring system. This Bradyrhizobium diazoefficiens (strain JCM 10833 / BCRC 13528 / IAM 13628 / NBRC 14792 / USDA 110) protein is Chorismate synthase.